Consider the following 165-residue polypeptide: Chorismate pyruvate-lyase (165 aa).

Residues methionine 35, arginine 77, leucine 115, and glutamate 156 each coordinate substrate.

This sequence belongs to the UbiC family. Monomer.

Its subcellular location is the cytoplasm. It catalyses the reaction chorismate = 4-hydroxybenzoate + pyruvate. It functions in the pathway cofactor biosynthesis; ubiquinone biosynthesis. In terms of biological role, removes the pyruvyl group from chorismate, with concomitant aromatization of the ring, to provide 4-hydroxybenzoate (4HB) for the ubiquinone pathway. The chain is Chorismate pyruvate-lyase from Escherichia coli O7:K1 (strain IAI39 / ExPEC).